The chain runs to 364 residues: DNA primase large subunit PriL (364 aa).

[4Fe-4S] cluster-binding residues include C237, C309, C318, and C325. Positions 345 to 364 (MQNDNEKGHEEKKEGETPPQ) are disordered.

This sequence belongs to the eukaryotic-type primase large subunit family. As to quaternary structure, heterodimer of a small subunit (PriS) and a large subunit (PriL). [4Fe-4S] cluster is required as a cofactor.

Its function is as follows. Regulatory subunit of DNA primase, an RNA polymerase that catalyzes the synthesis of short RNA molecules used as primers for DNA polymerase during DNA replication. Stabilizes and modulates the activity of the small subunit, increasing the rate of DNA synthesis, and conferring RNA synthesis capability. The DNA polymerase activity may enable DNA primase to also catalyze primer extension after primer synthesis. May also play a role in DNA repair. This Methanococcoides burtonii (strain DSM 6242 / NBRC 107633 / OCM 468 / ACE-M) protein is DNA primase large subunit PriL.